We begin with the raw amino-acid sequence, 357 residues long: NAD kinase 1 (357 aa).

Aspartate 68 functions as the Proton acceptor in the catalytic mechanism. NAD(+) contacts are provided by residues 68–69 (DG), arginine 73, 175–176 (ND), arginine 186, aspartate 205, alanine 240, and glutamine 275.

Belongs to the NAD kinase family. A divalent metal cation serves as cofactor.

It localises to the cytoplasm. The enzyme catalyses NAD(+) + ATP = ADP + NADP(+) + H(+). Functionally, involved in the regulation of the intracellular balance of NAD and NADP, and is a key enzyme in the biosynthesis of NADP. Catalyzes specifically the phosphorylation on 2'-hydroxyl of the adenosine moiety of NAD to yield NADP. The polypeptide is NAD kinase 1 (Streptomyces avermitilis (strain ATCC 31267 / DSM 46492 / JCM 5070 / NBRC 14893 / NCIMB 12804 / NRRL 8165 / MA-4680)).